Here is a 54-residue protein sequence, read N- to C-terminus: UPF0181 protein PM0480 (54 aa).

This sequence belongs to the UPF0181 family.

In Pasteurella multocida (strain Pm70), this protein is UPF0181 protein PM0480.